The sequence spans 212 residues: Thymidylate kinase (212 aa).

Position 11–18 (Gly-11–Thr-18) interacts with ATP.

The protein belongs to the thymidylate kinase family.

It catalyses the reaction dTMP + ATP = dTDP + ADP. Phosphorylation of dTMP to form dTDP in both de novo and salvage pathways of dTTP synthesis. In Streptococcus pneumoniae (strain Hungary19A-6), this protein is Thymidylate kinase.